Reading from the N-terminus, the 131-residue chain is uncharacterized protein (131 aa).

Positions 4 to 44 form a coiled coil; it reads QKPEQDVNKKIEELEKKVQELQEQLEKTKQAVKTVASILDN.

This is an uncharacterized protein from Sulfolobus islandicus filamentous virus (isolate Iceland/Hveragerdi) (SIFV).